The sequence spans 156 residues: MSRKHSAPIRKVLADPVFNSVLVTKLINAIMLDGKKSLAQDILYSAFNLVKEKTQKDPMEVFQAAIDNVTPQLEVRTRRIGGTNYQVPTEVSARRKQTLALRWLVQYARLRNEKTMDVRLANEIIDASNKTGGAIKKREDTHKMAEANRAFAHFRW.

It belongs to the universal ribosomal protein uS7 family. As to quaternary structure, part of the 30S ribosomal subunit. Contacts proteins S9 and S11.

One of the primary rRNA binding proteins, it binds directly to 16S rRNA where it nucleates assembly of the head domain of the 30S subunit. Is located at the subunit interface close to the decoding center, probably blocks exit of the E-site tRNA. The chain is Small ribosomal subunit protein uS7 from Mycoplasmopsis agalactiae (strain NCTC 10123 / CIP 59.7 / PG2) (Mycoplasma agalactiae).